A 581-amino-acid chain; its full sequence is 2-hydroxyacyl-CoA lyase 1 (581 aa).

Residues serine 4 and serine 6 each carry the phosphoserine modification. Glutamate 63 contributes to the thiamine diphosphate binding site. An N6-succinyllysine mark is found at lysine 354, lysine 361, and lysine 368. The interval 404 to 487 (TMDIGRTMLQ…IILLVVNNNG (84 aa)) is thiamine pyrophosphate binding. Mg(2+)-binding residues include aspartate 458 and asparagine 485. A Microbody targeting signal motif is present at residues 579–581 (SNM).

The protein belongs to the TPP enzyme family. Homotetramer. Mg(2+) serves as cofactor. Requires thiamine diphosphate as cofactor. As to expression, predominanly expressed in liver.

The protein resides in the peroxisome. The enzyme catalyses a 2-hydroxy-3-methyl fatty acyl-CoA = a 2-methyl-branched fatty aldehyde + formyl-CoA. It carries out the reaction an (R)-2-hydroxy-long-chain-fatty acyl-CoA = a long-chain fatty aldehyde + formyl-CoA. The catalysed reaction is 2-hydroxy-3-methylhexadecanoyl-CoA = 2-methylpentadecanal + formyl-CoA. It catalyses the reaction 2-hydroxyoctadecanoyl-CoA = heptadecanal + formyl-CoA. The enzyme catalyses 2-hydroxyphytanoyl-CoA = 2,6,10,14-tetramethylpentadecanal + formyl-CoA. It functions in the pathway lipid metabolism; fatty acid metabolism. Its function is as follows. Peroxisomal 2-OH acyl-CoA lyase involved in the cleavage (C1 removal) reaction in the fatty acid alpha-oxydation in a thiamine pyrophosphate (TPP)-dependent manner. Involved in the degradation of 3-methyl-branched fatty acids like phytanic acid and the shortening of 2-hydroxy long-chain fatty acids. Plays a significant role in the biosynthesis of heptadecanal in the liver. This is 2-hydroxyacyl-CoA lyase 1 (Hacl1) from Mus musculus (Mouse).